The sequence spans 194 residues: ATP-dependent Clp protease proteolytic subunit (194 aa).

Ser98 functions as the Nucleophile in the catalytic mechanism. Residue His123 is part of the active site.

This sequence belongs to the peptidase S14 family. As to quaternary structure, fourteen ClpP subunits assemble into 2 heptameric rings which stack back to back to give a disk-like structure with a central cavity, resembling the structure of eukaryotic proteasomes.

It is found in the cytoplasm. It catalyses the reaction Hydrolysis of proteins to small peptides in the presence of ATP and magnesium. alpha-casein is the usual test substrate. In the absence of ATP, only oligopeptides shorter than five residues are hydrolyzed (such as succinyl-Leu-Tyr-|-NHMec, and Leu-Tyr-Leu-|-Tyr-Trp, in which cleavage of the -Tyr-|-Leu- and -Tyr-|-Trp bonds also occurs).. In terms of biological role, cleaves peptides in various proteins in a process that requires ATP hydrolysis. Has a chymotrypsin-like activity. Plays a major role in the degradation of misfolded proteins. The chain is ATP-dependent Clp protease proteolytic subunit from Ruminiclostridium cellulolyticum (strain ATCC 35319 / DSM 5812 / JCM 6584 / H10) (Clostridium cellulolyticum).